Here is a 171-residue protein sequence, read N- to C-terminus: Small ribosomal subunit protein uS5 (171 aa).

Residues 14–77 (LKEKLVMVNR…EKAKKKLLKI (64 aa)) form the S5 DRBM domain.

It belongs to the universal ribosomal protein uS5 family. Part of the 30S ribosomal subunit. Contacts proteins S4 and S8.

Functionally, with S4 and S12 plays an important role in translational accuracy. In terms of biological role, located at the back of the 30S subunit body where it stabilizes the conformation of the head with respect to the body. This Karelsulcia muelleri (strain GWSS) (Sulcia muelleri) protein is Small ribosomal subunit protein uS5.